The sequence spans 150 residues: Large ribosomal subunit protein bL9 (150 aa).

The protein belongs to the bacterial ribosomal protein bL9 family.

Functionally, binds to the 23S rRNA. The protein is Large ribosomal subunit protein bL9 of Acidovorax ebreus (strain TPSY) (Diaphorobacter sp. (strain TPSY)).